The chain runs to 206 residues: Small ribosomal subunit protein uS5 (206 aa).

A compositionally biased stretch (polar residues) spans 1–15 (MTDTPTKQEIQSKND). The tract at residues 1-50 (MTDTPTKQEIQSKNDNVPGATPVEQKKNNRNDRKRNRRGDSKNLERDSDW) is disordered. Over residues 38 to 50 (RGDSKNLERDSDW) the composition is skewed to basic and acidic residues. Positions 50–113 (WQERVVQIRR…SDGKKNLVRV (64 aa)) constitute an S5 DRBM domain.

This sequence belongs to the universal ribosomal protein uS5 family. As to quaternary structure, part of the 30S ribosomal subunit. Contacts proteins S4 and S8.

Functionally, with S4 and S12 plays an important role in translational accuracy. In terms of biological role, located at the back of the 30S subunit body where it stabilizes the conformation of the head with respect to the body. The polypeptide is Small ribosomal subunit protein uS5 (Prochlorococcus marinus (strain MIT 9301)).